The chain runs to 482 residues: Sugar transporter ERD6-like 16 (482 aa).

Transmembrane regions (helical) follow at residues 42–62, 80–100, 117–137, 142–162, 173–193, 197–217, 280–300, 316–336, 344–364, 382–402, 413–433, and 443–463; these read LMVL…GSCV, LAEF…GAVM, SACF…ALLL, FFTG…IAEI, TLNQ…GSLI, TLAL…CFIP, VIIG…GIGF, LGTI…TILI, LIMI…TSFL, GVLI…WVIM, IAGS…SYTF, and GTFY…AKMV.

The protein belongs to the major facilitator superfamily. Sugar transporter (TC 2.A.1.1) family.

The protein resides in the membrane. Sugar transporter. The protein is Sugar transporter ERD6-like 16 of Arabidopsis thaliana (Mouse-ear cress).